The sequence spans 255 residues: Imidazole glycerol phosphate synthase subunit HisF (255 aa).

Residues Asp-11 and Asp-130 contribute to the active site.

The protein belongs to the HisA/HisF family. Heterodimer of HisH and HisF.

Its subcellular location is the cytoplasm. It carries out the reaction 5-[(5-phospho-1-deoxy-D-ribulos-1-ylimino)methylamino]-1-(5-phospho-beta-D-ribosyl)imidazole-4-carboxamide + L-glutamine = D-erythro-1-(imidazol-4-yl)glycerol 3-phosphate + 5-amino-1-(5-phospho-beta-D-ribosyl)imidazole-4-carboxamide + L-glutamate + H(+). It participates in amino-acid biosynthesis; L-histidine biosynthesis; L-histidine from 5-phospho-alpha-D-ribose 1-diphosphate: step 5/9. IGPS catalyzes the conversion of PRFAR and glutamine to IGP, AICAR and glutamate. The HisF subunit catalyzes the cyclization activity that produces IGP and AICAR from PRFAR using the ammonia provided by the HisH subunit. This is Imidazole glycerol phosphate synthase subunit HisF from Rhodopseudomonas palustris (strain BisB5).